The following is a 463-amino-acid chain: Phosphoglucosamine mutase (463 aa).

Catalysis depends on S101, which acts as the Phosphoserine intermediate. Mg(2+) contacts are provided by S101, D256, D258, and D260. S101 is subject to Phosphoserine.

This sequence belongs to the phosphohexose mutase family. Mg(2+) is required as a cofactor. In terms of processing, activated by phosphorylation.

It catalyses the reaction alpha-D-glucosamine 1-phosphate = D-glucosamine 6-phosphate. Its function is as follows. Catalyzes the conversion of glucosamine-6-phosphate to glucosamine-1-phosphate. This chain is Phosphoglucosamine mutase, found in Desulforapulum autotrophicum (strain ATCC 43914 / DSM 3382 / VKM B-1955 / HRM2) (Desulfobacterium autotrophicum).